Here is a 321-residue protein sequence, read N- to C-terminus: Ferredoxin--NADP reductase (321 aa).

FAD contacts are provided by glutamate 33, glutamine 41, tyrosine 46, valine 86, leucine 119, aspartate 277, and serine 318.

Belongs to the ferredoxin--NADP reductase type 2 family. As to quaternary structure, homodimer. FAD is required as a cofactor.

It catalyses the reaction 2 reduced [2Fe-2S]-[ferredoxin] + NADP(+) + H(+) = 2 oxidized [2Fe-2S]-[ferredoxin] + NADPH. In Lactococcus lactis subsp. cremoris (strain MG1363), this protein is Ferredoxin--NADP reductase.